The following is a 392-amino-acid chain: Sterol methyltransferase-like 3 (392 aa).

A helical membrane pass occupies residues 20 to 42 (VTPWQAAAGVTAAIFIGSYLWHS).

It belongs to the class I-like SAM-binding methyltransferase superfamily. Erg6/SMT family.

The protein resides in the microsome membrane. Its function is as follows. Unable to convert squalene, botryococcene, cycloartenol, zymosterol or lanosterol to mono-, di-, tri- or tetramethylated derivatives. This is Sterol methyltransferase-like 3 (SMT-3) from Botryococcus braunii (Green alga).